The following is a 404-amino-acid chain: DNA replication and repair protein RecF (404 aa).

ATP is bound at residue 30–37; that stretch reads GSNGQGKT.

It belongs to the RecF family.

The protein resides in the cytoplasm. Functionally, the RecF protein is involved in DNA metabolism; it is required for DNA replication and normal SOS inducibility. RecF binds preferentially to single-stranded, linear DNA. It also seems to bind ATP. This chain is DNA replication and repair protein RecF, found in Clavibacter michiganensis subsp. michiganensis (strain NCPPB 382).